Consider the following 1198-residue polypeptide: Structural polyprotein (1198 aa).

The interval 2–15 is interaction with host EXOC1; that stretch reads TKKPGGPGKNRAIN. At 2–109 the chain is on the cytoplasmic side; the sequence is TKKPGGPGKN…RKQNKRGGNE (108 aa). The segment at 37-72 is hydrophobic; homodimerization of capsid protein C; that stretch reads LLDGRGPVRFVLALITFFKFTALAPTKALLGRWKAV. Residues 106 to 127 constitute a propeptide, ER anchor for the capsid protein C, removed in mature form by serine protease NS3; that stretch reads GGNEGSIMWLASLAVVIAYAGA. The helical transmembrane segment at 110–130 threads the bilayer; sequence GSIMWLASLAVVIAYAGAMKL. Topologically, residues 131 to 253 are extracellular; that stretch reads SNFQGKLLMT…ATRYLMKTEN (123 aa). N-linked (GlcNAc...) asparagine; by host glycosylation is present at Asn-142. Residues 254-274 form a helical membrane-spanning segment; it reads WIIRNPGYAFLAATLGWMLGS. The Cytoplasmic portion of the chain corresponds to 275 to 279; the sequence is NNGQR. Residues 280–294 form a helical membrane-spanning segment; the sequence is VVFTILLLLVAPAYS. The Extracellular portion of the chain corresponds to 295–746; sequence FNCLGMGNRD…QVFGGAFRTL (452 aa). 6 disulfides stabilise this stretch: Cys-297-Cys-324, Cys-354-Cys-410, Cys-354-Cys-415, Cys-368-Cys-399, Cys-386-Cys-410, and Cys-386-Cys-415. The interval 392–405 is fusion peptide; the sequence is DRGWGNGCGLFGKG. Residue Asn-448 is glycosylated (N-linked (GlcNAc...) asparagine; by host). 2 disulfide bridges follow: Cys-484–Cys-581 and Cys-598–Cys-629. Residues 747 to 767 form a helical membrane-spanning segment; that stretch reads FGGMSWITQGLMGALLLWMGV. Residues 768–773 lie on the Cytoplasmic side of the membrane; the sequence is NARDRS. A helical membrane pass occupies residues 774–794; the sequence is IALAFLATGGVLVFLATNVHA. At 795-1198 the chain is on the extracellular side; it reads DTGCAIDITR…CADAWGHHLH (404 aa). 6 disulfides stabilise this stretch: Cys-798-Cys-809, Cys-849-Cys-937, Cys-973-Cys-1017, Cys-1074-Cys-1123, Cys-1085-Cys-1106, and Cys-1107-Cys-1110. N-linked (GlcNAc...) asparagine; by host glycans are attached at residues Asn-924 and Asn-1001. Positions 1152-1177 are disordered; sequence VDPFSAGPSGDVSGHPGGPSQEVDGQ.

As to quaternary structure, homodimer. Interacts (via N-terminus) with host EXOC1 (via C-terminus); this interaction results in EXOC1 degradation through the proteasome degradation pathway. Interacts with host CAPRIN1; this interaction is involved in the suppression of the integrated stress response. Forms heterodimers with envelope protein E in the endoplasmic reticulum and Golgi. In terms of assembly, homodimer; in the endoplasmic reticulum and Golgi. Interacts with protein prM. Interacts with non-structural protein 1. Genome polyprotein: Specific enzymatic cleavages in vivo yield mature proteins. Cleavages in the lumen of endoplasmic reticulum are performed by host signal peptidase, whereas cleavages in the cytoplasmic side are performed by serine protease NS3. Signal cleavage at the 2K-4B site requires a prior NS3 protease-mediated cleavage at the 4A-2K site. Post-translationally, cleaved in post-Golgi vesicles by a host furin, releasing the mature small envelope protein M, and peptide pr. This cleavage is incomplete as up to 30% of viral particles still carry uncleaved prM. In terms of processing, N-glycosylated.

It localises to the secreted. The protein localises to the virion membrane. Its subcellular location is the host endoplasmic reticulum membrane. Its function is as follows. Plays a role in virus budding by binding to the cell membrane and gathering the viral RNA into a nucleocapsid that forms the core of a mature virus particle. During virus entry, may induce genome penetration into the host cytoplasm after hemifusion induced by the surface proteins. Can migrate to the cell nucleus where it modulates host functions. Overcomes the anti-viral effects of host EXOC1 by sequestering and degrading the latter through the proteasome degradation pathway. Inhibits the integrated stress response (ISR) in the infected cell by binding to host CAPRIN1. Functionally, inhibits RNA silencing by interfering with host Dicer. In terms of biological role, prevents premature fusion activity of envelope proteins in trans-Golgi by binding to envelope protein E at pH6.0. After virion release in extracellular space, gets dissociated from E dimers. Acts as a chaperone for envelope protein E during intracellular virion assembly by masking and inactivating envelope protein E fusion peptide. prM is the only viral peptide matured by host furin in the trans-Golgi network probably to avoid catastrophic activation of the viral fusion activity in acidic Golgi compartment prior to virion release. prM-E cleavage is inefficient, and many virions are only partially matured. These uncleaved prM would play a role in immune evasion. Its function is as follows. May play a role in virus budding. Exerts cytotoxic effects by activating a mitochondrial apoptotic pathway through M ectodomain. May display a viroporin activity. Functionally, binds to host cell surface receptor and mediates fusion between viral and cellular membranes. Envelope protein is synthesized in the endoplasmic reticulum in the form of heterodimer with protein prM. They play a role in virion budding in the ER, and the newly formed immature particle is covered with 60 spikes composed of heterodimer between precursor prM and envelope protein E. The virion is transported to the Golgi apparatus where the low pH causes dissociation of PrM-E heterodimers and formation of E homodimers. prM-E cleavage is inefficient, and many virions are only partially matured. These uncleaved prM would play a role in immune evasion. In terms of biological role, may play a role in neuroinvasiveness. The chain is Structural polyprotein from Japanese encephalitis virus (strain Jaoars982) (JEV).